A 216-amino-acid polypeptide reads, in one-letter code: MPKFFCDYCDVYLTHDSMSVRKAHNAGRNHLRNVVEYYQQIGQEKAQSVIDSITSSYAAEGQAVPNPAMAPPGAFPPPFGFPGRPGQLPPPPFGIPPPGGPNGAPPGMPIPPPGGRGLPFPPPFPPAPGGAPGGLPPPPLGNMPPGQGFPPVPPPGGFPPNFQIPPPGAGGFPPVPPPGQPGFSPSPGPGMSGPPAPPGTGSSSLPGPPPGLSEKR.

The Matrin-type zinc finger occupies 4–36 (FFCDYCDVYLTHDSMSVRKAHNAGRNHLRNVVE). Composition is skewed to pro residues over residues 68-80 (AMAPPGAFPPPFG), 87-198 (QLPP…PAPP), and 206-216 (PGPPPGLSEKR). The segment at 68–216 (AMAPPGAFPP…GPPPGLSEKR (149 aa)) is disordered.

This sequence belongs to the U1 small nuclear ribonucleoprotein C family. As to quaternary structure, U1 snRNP is composed of the 7 core Sm proteins B/B', D1, D2, D3, E, F and G that assemble in a heptameric protein ring on the Sm site of the small nuclear RNA to form the core snRNP, and at least 3 U1 snRNP-specific proteins U1-70K, U1-A and U1-C. U1-C interacts with U1 snRNA and the 5' splice-site region of the pre-mRNA.

It localises to the nucleus. In terms of biological role, component of the spliceosomal U1 snRNP, which is essential for recognition of the pre-mRNA 5' splice-site and the subsequent assembly of the spliceosome. U1-C is directly involved in initial 5' splice-site recognition for both constitutive and regulated alternative splicing. The interaction with the 5' splice-site seems to precede base-pairing between the pre-mRNA and the U1 snRNA. Stimulates commitment or early (E) complex formation by stabilizing the base pairing of the 5' end of the U1 snRNA and the 5' splice-site region. This is U1 small nuclear ribonucleoprotein C from Aspergillus fumigatus (strain ATCC MYA-4609 / CBS 101355 / FGSC A1100 / Af293) (Neosartorya fumigata).